The sequence spans 61 residues: Small ribosomal subunit protein uS14 (61 aa).

Zn(2+) contacts are provided by cysteine 24, cysteine 27, cysteine 40, and cysteine 43.

It belongs to the universal ribosomal protein uS14 family. Zinc-binding uS14 subfamily. Part of the 30S ribosomal subunit. Contacts proteins S3 and S10. The cofactor is Zn(2+).

Its function is as follows. Binds 16S rRNA, required for the assembly of 30S particles and may also be responsible for determining the conformation of the 16S rRNA at the A site. The polypeptide is Small ribosomal subunit protein uS14 (Thermus aquaticus).